The primary structure comprises 199 residues: Recombination protein RecR (199 aa).

Residues 56–71 form a C4-type zinc finger; sequence CQQCNNYTEQTLCALC. Residues 79–174 enclose the Toprim domain; it reads TLLCVVESPA…NISQLAHGIP (96 aa).

This sequence belongs to the RecR family.

In terms of biological role, may play a role in DNA repair. It seems to be involved in an RecBC-independent recombinational process of DNA repair. It may act with RecF and RecO. The protein is Recombination protein RecR of Legionella pneumophila subsp. pneumophila (strain Philadelphia 1 / ATCC 33152 / DSM 7513).